The primary structure comprises 99 residues: Large ribosomal subunit protein bL27 (99 aa).

The interval 13-65 (AHHKGGGSTTNGRNSAGRRLGAKRADGQEVHAGSIIYRQRGTKIHPGKNVGRG) is disordered.

The protein belongs to the bacterial ribosomal protein bL27 family.

The chain is Large ribosomal subunit protein bL27 from Lactobacillus delbrueckii subsp. bulgaricus (strain ATCC BAA-365 / Lb-18).